Reading from the N-terminus, the 440-residue chain is V-type ATP synthase beta chain (440 aa).

This sequence belongs to the ATPase alpha/beta chains family.

Its function is as follows. Produces ATP from ADP in the presence of a proton gradient across the membrane. The V-type beta chain is a regulatory subunit. The protein is V-type ATP synthase beta chain of Geotalea uraniireducens (strain Rf4) (Geobacter uraniireducens).